A 354-amino-acid chain; its full sequence is Probable calcium-binding protein CML50 (354 aa).

2 stretches are compositionally biased toward low complexity: residues Met-1–Gly-10 and Tyr-28–Gly-71. The segment at Met-1–Tyr-159 is disordered. The span at Ala-72–Pro-81 shows a compositional bias: pro residues. A compositionally biased stretch (low complexity) spans Gly-106 to Pro-117. EF-hand domains lie at Gly-183–Arg-218 and Tyr-249–Ser-284. Ca(2+)-binding residues include Asp-196, Asp-198, Ser-200, Glu-207, Asp-262, Asp-264, Ser-266, Arg-268, and Glu-273.

Its function is as follows. Potential calcium sensor. This chain is Probable calcium-binding protein CML50 (CML50), found in Arabidopsis thaliana (Mouse-ear cress).